Reading from the N-terminus, the 215-residue chain is UPF0502 protein PputGB1_3531 (215 aa).

The protein belongs to the UPF0502 family.

The polypeptide is UPF0502 protein PputGB1_3531 (Pseudomonas putida (strain GB-1)).